The following is a 101-amino-acid chain: Large ribosomal subunit protein uL24 (101 aa).

It belongs to the universal ribosomal protein uL24 family. As to quaternary structure, part of the 50S ribosomal subunit.

One of two assembly initiator proteins, it binds directly to the 5'-end of the 23S rRNA, where it nucleates assembly of the 50S subunit. Its function is as follows. One of the proteins that surrounds the polypeptide exit tunnel on the outside of the subunit. In Lactococcus lactis subsp. lactis (strain IL1403) (Streptococcus lactis), this protein is Large ribosomal subunit protein uL24.